The following is a 134-amino-acid chain: MAESFNFELVSPERLLVSEKVTEVVIPATEGEMTVMANHAPTMTTIKPGVVAVKTAAGKTERYAVFGGFADILPSGCTLLAESAVHVDELDPTVLENRIEAARAELEGAGDEKKTRLEQFIAELTKLGEIVIPA.

Belongs to the ATPase epsilon chain family. In terms of assembly, F-type ATPases have 2 components, CF(1) - the catalytic core - and CF(0) - the membrane proton channel. CF(1) has five subunits: alpha(3), beta(3), gamma(1), delta(1), epsilon(1). CF(0) has three main subunits: a, b and c.

It localises to the cell inner membrane. In terms of biological role, produces ATP from ADP in the presence of a proton gradient across the membrane. This chain is ATP synthase epsilon chain, found in Rhizobium meliloti (strain 1021) (Ensifer meliloti).